We begin with the raw amino-acid sequence, 146 residues long: 3-dehydroquinate dehydratase (146 aa).

The active-site Proton acceptor is the Tyr22. Positions 74, 80, and 87 each coordinate substrate. His100 functions as the Proton donor in the catalytic mechanism. Residues 101–102 (LS) and Arg111 each bind substrate.

This sequence belongs to the type-II 3-dehydroquinase family. Homododecamer.

The catalysed reaction is 3-dehydroquinate = 3-dehydroshikimate + H2O. It participates in metabolic intermediate biosynthesis; chorismate biosynthesis; chorismate from D-erythrose 4-phosphate and phosphoenolpyruvate: step 3/7. Functionally, catalyzes a trans-dehydration via an enolate intermediate. The protein is 3-dehydroquinate dehydratase of Clostridium beijerinckii (strain ATCC 51743 / NCIMB 8052) (Clostridium acetobutylicum).